The chain runs to 644 residues: Exoribonuclease 2 (644 aa).

An RNB domain is found at 189-516 (RQDLTALNFV…NHRLLKAVIK (328 aa)). The region spanning 561–643 (NTRFAAEIID…ETRSIIARPA (83 aa)) is the S1 motif domain.

Belongs to the RNR ribonuclease family. RNase II subfamily.

The protein localises to the cytoplasm. It catalyses the reaction Exonucleolytic cleavage in the 3'- to 5'-direction to yield nucleoside 5'-phosphates.. In terms of biological role, involved in mRNA degradation. Hydrolyzes single-stranded polyribonucleotides processively in the 3' to 5' direction. The polypeptide is Exoribonuclease 2 (Salmonella dublin (strain CT_02021853)).